The sequence spans 97 residues: Protein 9b (97 aa).

The region spanning 8–97 (VPPALHLVDP…PDEFVVVTAK (90 aa)) is the 9b domain.

Belongs to the coronavirus group 2 protein 9b family. As to quaternary structure, homodimer.

It is found in the host cytoplasmic vesicle membrane. The protein resides in the host cytoplasm. The polypeptide is Protein 9b (Rhinolophus sinicus (Chinese rufous horseshoe bat)).